Consider the following 1642-residue polypeptide: Cortactin-binding protein 2 (1642 aa).

Disordered regions lie at residues 1-27 (MATD…AEAA), 203-222 (KKKT…RSTE), 366-433 (IGAS…HPGL), 446-471 (GSNA…SPTS), and 491-611 (RFTS…PSID). Residues 119–276 (RKMQERMSTQ…EQLKRGTDSK (158 aa)) are a coiled coil. The span at 385 to 394 (GPSTGSTADL) shows a compositional bias: polar residues. Positions 395–407 (TSSPTPVPSTVSP) are enriched in low complexity. Arg-491 is subject to Asymmetric dimethylarginine. Over residues 497–506 (AGAPPRPGAP) the composition is skewed to pro residues. The span at 576 to 586 (TVASPPSTLPQ) shows a compositional bias: polar residues. ANK repeat units lie at residues 702–732 (GRPT…DINY), 736–765 (DGHS…QVNV), 769–798 (NGFT…NINH), 802–831 (GGQT…DRSV), 835–864 (DGWT…PAHG), and 904–934 (EGWT…EPER). Residues 1440–1469 (ESGAWRKVSTSPRKKSGRFSSPTWNKPDLS) are disordered. Residue Ser-1513 is modified to Phosphoserine. Residues 1546 to 1642 (RRFDSSGNNP…NSRDLEPTQK (97 aa)) are disordered. 2 stretches are compositionally biased toward polar residues: residues 1552–1563 (GNNPVFSATVNN) and 1571–1588 (KEVS…SNSK). The span at 1613–1627 (SQNTKRSSSSSNTRQ) shows a compositional bias: low complexity.

As to quaternary structure, interacts with CTTN/cortactin SH3 domain. Interacts with STRN, STRN4/zinedin and MOB4/phocein; this interactions mediate the association with the STRIPAK core complex and may regulate dendritic spine distribution of the STRIPAK complex in hippocampal neurons. Activation of glutamate receptors weakens the interaction with STRN and STRN4.

The protein localises to the cytoplasm. Its subcellular location is the cell cortex. It localises to the cell projection. It is found in the dendritic spine. Its function is as follows. Regulates the dendritic spine distribution of CTTN/cortactin in hippocampal neurons, and thus controls dendritic spinogenesis and dendritic spine maintenance. Associates with the striatin-interacting phosphatase and kinase (STRIPAK) core complex to regulate dendritic spine distribution of the STRIPAK complex in hippocampal neurons. This chain is Cortactin-binding protein 2 (CTTNBP2), found in Muntiacus reevesi (Reeves' muntjac).